Reading from the N-terminus, the 343-residue chain is Tetraacyldisaccharide 4'-kinase (343 aa).

61-68 (GVGGNGKT) lines the ATP pocket.

This sequence belongs to the LpxK family.

The catalysed reaction is a lipid A disaccharide + ATP = a lipid IVA + ADP + H(+). It functions in the pathway glycolipid biosynthesis; lipid IV(A) biosynthesis; lipid IV(A) from (3R)-3-hydroxytetradecanoyl-[acyl-carrier-protein] and UDP-N-acetyl-alpha-D-glucosamine: step 6/6. Its function is as follows. Transfers the gamma-phosphate of ATP to the 4'-position of a tetraacyldisaccharide 1-phosphate intermediate (termed DS-1-P) to form tetraacyldisaccharide 1,4'-bis-phosphate (lipid IVA). This chain is Tetraacyldisaccharide 4'-kinase, found in Colwellia psychrerythraea (strain 34H / ATCC BAA-681) (Vibrio psychroerythus).